Consider the following 105-residue polypeptide: MDTQDIVSEISELNLTYLMLAQQMLAKDRDAALFRLGISEELADILLTMSPAQIVKLASTNMMLCRFRFDDHAILGLVTQPHRDKGLQQSQMSILLARQAVEQIS.

It belongs to the FlhD family. As to quaternary structure, homodimer; disulfide-linked. Forms a heterohexamer composed of two FlhC and four FlhD subunits. Each FlhC binds a FlhD dimer, forming a heterotrimer, and a hexamer assembles by dimerization of two heterotrimers.

It localises to the cytoplasm. Functions in complex with FlhC as a master transcriptional regulator that regulates transcription of several flagellar and non-flagellar operons by binding to their promoter region. Activates expression of class 2 flagellar genes, including fliA, which is a flagellum-specific sigma factor that turns on the class 3 genes. Also regulates genes whose products function in a variety of physiological pathways. The polypeptide is Flagellar transcriptional regulator FlhD (Ralstonia pickettii (strain 12J)).